The chain runs to 225 residues: Transmembrane protein C16orf54 homolog (225 aa).

A helical membrane pass occupies residues 34–54 (IPIMLGLASLTAFFIITTAVL). The disordered stretch occupies residues 107–149 (RAPDPPTPGGTLEGRATAPPAIPTPHPSPSSLVPQTPPEVPAQ). 2 positions are modified to phosphothreonine: threonine 113 and threonine 117. Serine 195 is modified (phosphoserine).

Its subcellular location is the membrane. The protein is Transmembrane protein C16orf54 homolog of Rattus norvegicus (Rat).